A 208-amino-acid chain; its full sequence is Somatotropin-B (208 aa).

Residues 1–25 (MVPGSCSSFGLLVILSFQNVPDVGG) form the signal peptide. Residue His-44 coordinates Zn(2+). Residues Cys-77 and Cys-181 are joined by a disulfide bond. Glu-190 contacts Zn(2+). An intrachain disulfide couples Cys-198 to Cys-206.

This sequence belongs to the somatotropin/prolactin family.

The protein resides in the secreted. Functionally, growth hormone plays an important role in growth control. The sequence is that of Somatotropin-B (gh-b) from Xenopus laevis (African clawed frog).